A 450-amino-acid chain; its full sequence is UPF0210 protein CPE1497 (450 aa).

This sequence belongs to the UPF0210 family. As to quaternary structure, homodimer.

This Clostridium perfringens (strain 13 / Type A) protein is UPF0210 protein CPE1497.